The sequence spans 424 residues: Dihydrolipoyllysine-residue succinyltransferase component of 2-oxoglutarate dehydrogenase complex (424 aa).

One can recognise a Lipoyl-binding domain in the interval 1-76 (MPEVKVPELA…EVGQAIAVVG (76 aa)). At Lys42 the chain carries N6-lipoyllysine. Disordered stretches follow at residues 76–138 (GEGS…KYAR) and 155–204 (VRKE…RKKT). A compositionally biased stretch (basic and acidic residues) spans 91–105 (EAPKQETETSTDDKS). A compositionally biased stretch (polar residues) spans 122–131 (DNNQRVNATP). The 37-residue stretch at 128–164 (NATPSARKYAREKGIDLSEIAAASNDVVRKEHVDQSQ) folds into the Peripheral subunit-binding (PSBD) domain. Positions 162-176 (QSQTQTSTQQQAQPA) are enriched in low complexity. Catalysis depends on residues His395 and Asp399.

The protein belongs to the 2-oxoacid dehydrogenase family. As to quaternary structure, forms a 24-polypeptide structural core with octahedral symmetry. Part of the 2-oxoglutarate dehydrogenase (OGDH) complex composed of E1 (2-oxoglutarate dehydrogenase), E2 (dihydrolipoamide succinyltransferase) and E3 (dihydrolipoamide dehydrogenase); the complex contains multiple copies of the three enzymatic components (E1, E2 and E3). (R)-lipoate is required as a cofactor.

It carries out the reaction N(6)-[(R)-dihydrolipoyl]-L-lysyl-[protein] + succinyl-CoA = N(6)-[(R)-S(8)-succinyldihydrolipoyl]-L-lysyl-[protein] + CoA. The protein operates within amino-acid degradation; L-lysine degradation via saccharopine pathway; glutaryl-CoA from L-lysine: step 6/6. Functionally, E2 component of the 2-oxoglutarate dehydrogenase (OGDH) complex which catalyzes the second step in the conversion of 2-oxoglutarate to succinyl-CoA and CO(2). This is Dihydrolipoyllysine-residue succinyltransferase component of 2-oxoglutarate dehydrogenase complex (odhB) from Staphylococcus saprophyticus subsp. saprophyticus (strain ATCC 15305 / DSM 20229 / NCIMB 8711 / NCTC 7292 / S-41).